A 128-amino-acid polypeptide reads, in one-letter code: Large ribosomal subunit protein bL17 (128 aa).

This sequence belongs to the bacterial ribosomal protein bL17 family. Part of the 50S ribosomal subunit. Contacts protein L32.

This Streptococcus equi subsp. equi (strain 4047) protein is Large ribosomal subunit protein bL17.